A 212-amino-acid chain; its full sequence is LexA repressor (212 aa).

A DNA-binding region (H-T-H motif) is located at residues 29 to 49 (VREIGEAVGLSSSSTIHGHIE). Catalysis depends on for autocatalytic cleavage activity residues Ser133 and Lys171.

Belongs to the peptidase S24 family. In terms of assembly, homodimer.

It carries out the reaction Hydrolysis of Ala-|-Gly bond in repressor LexA.. Represses a number of genes involved in the response to DNA damage (SOS response), including recA and lexA. In the presence of single-stranded DNA, RecA interacts with LexA causing an autocatalytic cleavage which disrupts the DNA-binding part of LexA, leading to derepression of the SOS regulon and eventually DNA repair. In Leuconostoc mesenteroides subsp. mesenteroides (strain ATCC 8293 / DSM 20343 / BCRC 11652 / CCM 1803 / JCM 6124 / NCDO 523 / NBRC 100496 / NCIMB 8023 / NCTC 12954 / NRRL B-1118 / 37Y), this protein is LexA repressor.